Consider the following 476-residue polypeptide: Monodehydroascorbate reductase 2, peroxisomal (476 aa).

Topologically, residues 1–3 (MGR) are cytoplasmic. A helical transmembrane segment spans residues 4-24 (AFVHVILGGGVAAGYAALEFA). Residues 12-15 (GGVA), Glu-40, Arg-47, Lys-52, and 146-147 (RN) contribute to the FAD site. Topologically, residues 25 to 447 (RRGGYSRGEL…GGLALGEKPT (423 aa)) are peroxisomal. Residues 171–177 (GGYIGME), Glu-195, Arg-201, and Gly-260 contribute to the NAD(+) site. 173–177 (YIGME) serves as a coordination point for NADP(+). Arg-201 and Gly-260 together coordinate NADP(+). Residue Asp-297 participates in FAD binding. 314 to 315 (EH) is a binding site for NAD(+). NADP(+) is bound at residue 314-315 (EH). Val-316 contacts FAD. Arg-320 contacts L-ascorbate. An FAD-binding site is contributed by Tyr-346. Tyr-346 lines the NAD(+) pocket. Residue Tyr-346 coordinates NADP(+). Arg-348 contacts L-ascorbate. The chain crosses the membrane as a helical span at residues 448–468 (YVWHATAGVIAAASIAAFGYW). Over 469–476 (YGRKRRRW) the chain is Cytoplasmic.

This sequence belongs to the FAD-dependent oxidoreductase family. FAD is required as a cofactor.

Its subcellular location is the peroxisome membrane. It carries out the reaction 2 monodehydro-L-ascorbate radical + NADH + H(+) = 2 L-ascorbate + NAD(+). Functionally, catalyzes the conversion of monodehydroascorbate to ascorbate, oxidizing NADH in the process. Ascorbate is a major antioxidant against reactive oxygen species (ROS) and nitric oxide (NO). The chain is Monodehydroascorbate reductase 2, peroxisomal from Oryza sativa subsp. japonica (Rice).